The following is a 398-amino-acid chain: Fatty-acid-binding protein 2 (398 aa).

Dodecanoate-binding residues include Arg-222, Tyr-235, and Ser-302.

This sequence belongs to the chalcone isomerase family. As to expression, expressed in developing cotyledons, young seedlings, roots, seeds, embryos, macrospores, preanthesis and tapetum. Restricted to developing and reproductive tissues.

The protein localises to the plastid. It is found in the chloroplast stroma. Functionally, fatty-acid-binding protein. Associates with saturated fatty acid. This Arabidopsis thaliana (Mouse-ear cress) protein is Fatty-acid-binding protein 2 (FAP2).